The sequence spans 288 residues: 33 kDa chaperonin (288 aa).

Cystine bridges form between cysteine 236–cysteine 238 and cysteine 269–cysteine 272.

This sequence belongs to the HSP33 family. Post-translationally, under oxidizing conditions two disulfide bonds are formed involving the reactive cysteines. Under reducing conditions zinc is bound to the reactive cysteines and the protein is inactive.

The protein resides in the cytoplasm. Functionally, redox regulated molecular chaperone. Protects both thermally unfolding and oxidatively damaged proteins from irreversible aggregation. Plays an important role in the bacterial defense system toward oxidative stress. The protein is 33 kDa chaperonin of Lactococcus lactis subsp. cremoris (strain SK11).